Consider the following 707-residue polypeptide: NADP(+)-dependent formate dehydrogenase subunit beta (707 aa).

Heterotetramer composed of two alpha (FdhA) and two beta (FdhB) subunits.

It is found in the cytoplasm. The enzyme catalyses formate + NADP(+) = CO2 + NADPH. Its activity is regulated as follows. Activity is very sensitive to oxygen. The activity in growing cells is enhanced when selenite and molybdate are added together to the growth medium. Tungstate replaces and is better than molybdate. Selenite is incorporated into the enzyme. Requires a sulfhydryl compound for activity. Inhibited by cyanide, EDTA, hypophosphite and mercaptoethanol. Sulfite inhibits the activity with NADP but not with methyl viologen as electron acceptor. Its function is as follows. Component of a dehydrogenase that catalyzes the NADP-dependent reduction of CO(2) to formate, the first step in the synthesis of the methyl group of acetate during synthesis of acetate from CO(2). In vitro, can use methyl viologen and benzyl viologen in addition to its natural electron acceptor. The sequence is that of NADP(+)-dependent formate dehydrogenase subunit beta from Moorella thermoacetica (Clostridium thermoaceticum).